We begin with the raw amino-acid sequence, 255 residues long: Gene 54 protein (255 aa).

The polypeptide is Gene 54 protein (54) (Mycobacterium phage D29 (Mycobacteriophage D29)).